The primary structure comprises 204 residues: LexA repressor (204 aa).

Residues 31–51 (VREIGQAVGLKSSSTVHTHLV) constitute a DNA-binding region (H-T-H motif). Residues serine 128 and lysine 165 each act as for autocatalytic cleavage activity in the active site.

It belongs to the peptidase S24 family. As to quaternary structure, homodimer.

It catalyses the reaction Hydrolysis of Ala-|-Gly bond in repressor LexA.. In terms of biological role, represses a number of genes involved in the response to DNA damage (SOS response), including recA and lexA. In the presence of single-stranded DNA, RecA interacts with LexA causing an autocatalytic cleavage which disrupts the DNA-binding part of LexA, leading to derepression of the SOS regulon and eventually DNA repair. This Syntrophomonas wolfei subsp. wolfei (strain DSM 2245B / Goettingen) protein is LexA repressor.